The following is a 732-amino-acid chain: Polyphosphate kinase (732 aa).

Asn61 is a binding site for ATP. Mg(2+)-binding residues include Arg417 and Arg447. Residue His477 is the Phosphohistidine intermediate of the active site. ATP contacts are provided by Tyr510, Arg606, and His634. The tract at residues 699 to 718 (DGTYRQRQPAPGEAERGTHS) is disordered.

The protein belongs to the polyphosphate kinase 1 (PPK1) family. Mg(2+) is required as a cofactor. Post-translationally, an intermediate of this reaction is the autophosphorylated ppk in which a phosphate is covalently linked to a histidine residue through a N-P bond.

The catalysed reaction is [phosphate](n) + ATP = [phosphate](n+1) + ADP. Catalyzes the reversible transfer of the terminal phosphate of ATP to form a long-chain polyphosphate (polyP). The polypeptide is Polyphosphate kinase (Thermosynechococcus vestitus (strain NIES-2133 / IAM M-273 / BP-1)).